A 311-amino-acid chain; its full sequence is Ribosomal RNA small subunit methyltransferase H (311 aa).

S-adenosyl-L-methionine contacts are provided by residues 33–35 (GGH), D51, F78, D99, and Q106. Positions 289 to 311 (EEIEKNRRAHSAKLRAAEKLSFA) are disordered.

It belongs to the methyltransferase superfamily. RsmH family.

The protein localises to the cytoplasm. The enzyme catalyses cytidine(1402) in 16S rRNA + S-adenosyl-L-methionine = N(4)-methylcytidine(1402) in 16S rRNA + S-adenosyl-L-homocysteine + H(+). In terms of biological role, specifically methylates the N4 position of cytidine in position 1402 (C1402) of 16S rRNA. In Carboxydothermus hydrogenoformans (strain ATCC BAA-161 / DSM 6008 / Z-2901), this protein is Ribosomal RNA small subunit methyltransferase H.